A 215-amino-acid polypeptide reads, in one-letter code: Pyrrolidone-carboxylate peptidase (215 aa).

Active-site residues include Glu80, Cys143, and His167.

This sequence belongs to the peptidase C15 family. Homotetramer.

The protein resides in the cytoplasm. It catalyses the reaction Release of an N-terminal pyroglutamyl group from a polypeptide, the second amino acid generally not being Pro.. Functionally, removes 5-oxoproline from various penultimate amino acid residues except L-proline. This is Pyrrolidone-carboxylate peptidase from Bacillus anthracis.